The chain runs to 144 residues: MAKRGGKRTVGVSYRFHVTPGIFLNSLVPVADNSGARLVRVIGVVGHYSKTVHRRIPGAGVGDMVVVVVREGKPELRKQIFRAIVVRQRRPYRRPDGTWVAFEDNAVVIVTPEGDPKGSEIHGPVAMEATLRWPTIANLASIIV.

This sequence belongs to the universal ribosomal protein uL14 family. Part of the 50S ribosomal subunit. Forms a cluster with proteins L3 and L24e, part of which may contact the 16S rRNA in 2 intersubunit bridges.

Binds to 23S rRNA. Forms part of two intersubunit bridges in the 70S ribosome. This chain is Large ribosomal subunit protein uL14, found in Pyrobaculum islandicum (strain DSM 4184 / JCM 9189 / GEO3).